The chain runs to 68 residues: Sec-independent protein translocase protein TatA (68 aa).

A helical transmembrane segment spans residues 1 to 21 (MGSFSIWHWLIVLVVVLLLFG). The disordered stretch occupies residues 46–68 (EEAASADKTIDGKTVEHKSDEVR). Over residues 53–68 (KTIDGKTVEHKSDEVR) the composition is skewed to basic and acidic residues.

Belongs to the TatA/E family. In terms of assembly, the Tat system comprises two distinct complexes: a TatABC complex, containing multiple copies of TatA, TatB and TatC subunits, and a separate TatA complex, containing only TatA subunits. Substrates initially bind to the TatABC complex, which probably triggers association of the separate TatA complex to form the active translocon.

The protein localises to the cell inner membrane. Its function is as follows. Part of the twin-arginine translocation (Tat) system that transports large folded proteins containing a characteristic twin-arginine motif in their signal peptide across membranes. TatA could form the protein-conducting channel of the Tat system. The protein is Sec-independent protein translocase protein TatA of Sinorhizobium fredii (strain NBRC 101917 / NGR234).